Here is a 141-residue protein sequence, read N- to C-terminus: Large ribosomal subunit protein bL17 (141 aa).

The protein belongs to the bacterial ribosomal protein bL17 family. In terms of assembly, part of the 50S ribosomal subunit. Contacts protein L32.

The polypeptide is Large ribosomal subunit protein bL17 (Gluconacetobacter diazotrophicus (strain ATCC 49037 / DSM 5601 / CCUG 37298 / CIP 103539 / LMG 7603 / PAl5)).